A 546-amino-acid polypeptide reads, in one-letter code: Cytochrome P450 monooxygenase gloP (546 aa).

A helical membrane pass occupies residues 17 to 37 (TLSGGILTFLFIVVIAHFVLT). 3 N-linked (GlcNAc...) asparagine glycosylation sites follow: N189, N413, and N416. C492 is a binding site for heme.

The protein belongs to the cytochrome P450 family. It depends on heme as a cofactor.

It localises to the membrane. It functions in the pathway mycotoxin biosynthesis. Functionally, cytochrome P450 monooxygenase; part of the gene cluster that mediates the biosynthesis of pneumocandins, lipohexapeptides of the echinocandin family that prevent fungal cell wall formation by non-competitive inhibition of beta-1,3-glucan synthase. The 10,12-dimethylmyristoyl side chain is synthesized by the reducing polyketide synthase gloL/GLPKS4. The thioesterase gloN/GLHYD exclusively interacts with gloL/GLPKS4 to maintain turnover of the polyketide side chain. The 10R,12S-dimethylmyristic acid is then transferred to the first thiolation domain of the nonribosomal peptide synthetase gloA/GLNRPS4 by the acyl-AMP ligase gloD/GLligase, followed by its acylation to L-ornithine to trigger elongation of the cyclic hexapeptide. L-ornithine, 4R-hydroxyl-L-proline (generated from L-proline by the dioxygenase gloF/GLOXY2), 3S-hydroxyl-L-homotyrosine (generated by gloG/GLHtyB, gloH/GLHtyA, gloI/GLHtyC, gloJ/GLHtyD and hydroxylated at C-3 by the dioxygenase gloM/GLOXY1), 3R-hydroxyl-L-glutamine (generated from L-glutamine probably by the dioxygenase gloE/GLOXY3) and 3S-hydroxyl-L-proline (generated from L-proline by the dioxygenase gloF/GLOXY2 to yield pneumocandin B0), or 3S-hydroxyl-4S-methyl-L-proline (generated from L-leucine by the dioxygenase gloC/GLOXY4 to yield pneumocandin A0) are sequentially added to the growing chain. The last C domain of gloA/GLNRPS4 is proposed to be responsible for cyclization by condensation to form the peptide bond between L-ornithine and 3S-hydroxyl-4S-methyl-L-proline (for pneumocandin A0) or 3S-hydroxyl-L-proline (for pneumocandin B0). Finally, the subsequent C-4 hydroxylation of 3S-hydroxyl-L-homotyrosine and L-ornithine dihydroxylation at C-4 and C-5 are performed by the cytochrome P450 monooxygenases gloP/GLP450-1 and gloO/GLP450-2, respectively. The polypeptide is Cytochrome P450 monooxygenase gloP (Glarea lozoyensis (strain ATCC 20868 / MF5171)).